The primary structure comprises 348 residues: MAVYFVTGKLGSGKTLVSVGKIQDKIVAGCKIATNLDLRLQNLPQVGRFAKTPRVLRIPDKPSISDLLAIGRGNDSYDENKNGLLVLDECGTWFNTRSWNDKERQPIIDWFLHARKLGWDIIFLVQDLSIVDKQARSALAEHVVYCRRLDRITLPFVGTLYSLITGSKMPLPKLHVGVVKYGDSQLSPTVERWLYTGKNLYNAYDTKQAFSSNYDSGVYSYLTPYLSHGRYFKPLNLGQKMKLTKIYLKKFSRVLCLAIGFASAFTYSYITQPKPEVKKVVSQTYDFDKFTIDSSQRLNLSYRYVFKDSKGKLINSDDLQKQGYSLTYIDLCTVSIKKGNSNEIVKCN.

Residue 8–15 coordinates ATP; it reads GKLGSGKT. The chain crosses the membrane as a helical span at residues 254–270; the sequence is VLCLAIGFASAFTYSYI.

Belongs to the inovirus G1P protein family. Interacts with G4P; this interaction results in a complex that spans the inner an outer host membranes.

Its subcellular location is the host membrane. Functionally, isoform G1P plays an essential role in phage assembly. It is required to increase the number of adhesion zones between the inner and outer membranes of the host cell. The extrusion of neo-synthesized phages occurs at these adhesion sites. May be involved with G4P in creating zone through which the phage assembled and extruded. Its function is as follows. Isoform G11P is also involved in phage assembly, probably playing a structural role in the formation of the phage assembly site. This is Gene 1 protein (I) from Escherichia coli (Bacteriophage M13).